The primary structure comprises 62 residues: MLCLPVFIILLLLASPAAPNPLERRIQSDLIRAALEDADMKTEKGILSSIMGTLGKIVGLAP.

An N-terminal signal peptide occupies residues 1-19 (MLCLPVFIILLLLASPAAP). The propeptide occupies 20 to 54 (NPLERRIQSDLIRAALEDADMKTEKGILSSIMGTL).

It belongs to the conotoxin T superfamily. As to expression, expressed by the venom duct.

Its subcellular location is the secreted. The polypeptide is Conotoxin TsMLCL-02 (Conus tessulatus (Tessellate cone)).